Here is a 181-residue protein sequence, read N- to C-terminus: Adenylate kinase (181 aa).

Position 10–15 (10–15) interacts with ATP; it reads GAGKGT. The interval 30–59 is NMP; that stretch reads STGELFRKNIQDGTKLGIEAKRYLDAGDLV. Residues Thr-31, Arg-36, 57 to 59, 85 to 88, and Gln-92 each bind AMP; these read DLV and GYPR. Positions 126-132 are LID; it reads GRGRADD. ATP is bound at residue Arg-127. AMP-binding residues include Arg-129 and Arg-140. Gly-166 is an ATP binding site.

This sequence belongs to the adenylate kinase family. In terms of assembly, monomer.

It localises to the cytoplasm. The enzyme catalyses AMP + ATP = 2 ADP. The protein operates within purine metabolism; AMP biosynthesis via salvage pathway; AMP from ADP: step 1/1. Functionally, catalyzes the reversible transfer of the terminal phosphate group between ATP and AMP. Plays an important role in cellular energy homeostasis and in adenine nucleotide metabolism. The sequence is that of Adenylate kinase from Mycobacterium marinum (strain ATCC BAA-535 / M).